Reading from the N-terminus, the 214-residue chain is Large ribosomal subunit protein uL18 (214 aa).

The protein belongs to the universal ribosomal protein uL18 family. As to quaternary structure, part of the 50S ribosomal subunit. Contacts the 5S and 23S rRNAs.

This is one of the proteins that bind and probably mediate the attachment of the 5S RNA into the large ribosomal subunit, where it forms part of the central protuberance. The chain is Large ribosomal subunit protein uL18 from Aeropyrum pernix (strain ATCC 700893 / DSM 11879 / JCM 9820 / NBRC 100138 / K1).